The sequence spans 204 residues: Spermatogenesis-associated protein 46 (204 aa).

Residues 101-120 form a disordered region; it reads SSSSQENTYPREANRKSKHG.

As to expression, testis-specific.

The protein localises to the nucleus membrane. Its function is as follows. Plays a role in spermiogenesis and fertilization. The polypeptide is Spermatogenesis-associated protein 46 (Spata46) (Mus musculus (Mouse)).